Here is a 599-residue protein sequence, read N- to C-terminus: Proline dehydrogenase 1, mitochondrial (599 aa).

2 disordered regions span residues 20 to 39 (STKPQAQEQPPASPEALRGC) and 152 to 180 (EEAERKEMESCTSEAERDGSGANKREKQY). Residues 23–39 (PQAQEQPPASPEALRGC) show a composition bias toward low complexity. The segment covering 153-180 (EAERKEMESCTSEAERDGSGANKREKQY) has biased composition (basic and acidic residues). K356, K367, and K485 each carry N6-acetyllysine.

This sequence belongs to the proline oxidase family. The cofactor is FAD. Expressed in liver, kidney, heart and to a lesser extent in brain, lung and muscle.

Its subcellular location is the mitochondrion matrix. The enzyme catalyses L-proline + a quinone = (S)-1-pyrroline-5-carboxylate + a quinol + H(+). The protein operates within amino-acid degradation; L-proline degradation into L-glutamate; L-glutamate from L-proline: step 1/2. Its function is as follows. Converts proline to delta-1-pyrroline-5-carboxylate. In Mus musculus (Mouse), this protein is Proline dehydrogenase 1, mitochondrial (Prodh).